Here is a 782-residue protein sequence, read N- to C-terminus: Probable methionine--tRNA ligase, cytoplasmic (782 aa).

The 'HIGH' region motif lies at 231 to 241; the sequence is PYVNNVPHLGN. The 'KMSKS' region signature appears at 551–555; that stretch reads KFSKS.

This sequence belongs to the class-I aminoacyl-tRNA synthetase family.

The protein resides in the cytoplasm. It carries out the reaction tRNA(Met) + L-methionine + ATP = L-methionyl-tRNA(Met) + AMP + diphosphate. This chain is Probable methionine--tRNA ligase, cytoplasmic (rar1), found in Schizosaccharomyces pombe (strain 972 / ATCC 24843) (Fission yeast).